The chain runs to 145 residues: YIDAETMHLHHDKHHQTYVNNANAALEKHPEIGEDLEALLADVESIPADIRQALINNGGGHLNHALFWELMTPEKTAPSAELAAAIDATFGSFEEFQAAFTAAATTRFGSGWAWLVVNKEGKLEVTSTANQDTPISEGKKPILGL.

Positions 10 and 64 each coordinate Fe(3+). Residues histidine 10 and histidine 64 each coordinate Mn(2+). Residues 126-145 (TSTANQDTPISEGKKPILGL) form a disordered region.

Belongs to the iron/manganese superoxide dismutase family. It depends on Mn(2+) as a cofactor. The cofactor is Fe(3+).

It catalyses the reaction 2 superoxide + 2 H(+) = H2O2 + O2. Functionally, destroys superoxide anion radicals which are normally produced within the cells and which are toxic to biological systems. Catalyzes the dismutation of superoxide anion radicals into O2 and H2O2 by successive reduction and oxidation of the transition metal ion at the active site. This chain is Superoxide dismutase [Mn/Fe] (sodA), found in Streptococcus mitis.